We begin with the raw amino-acid sequence, 135 residues long: Small ribosomal subunit protein eS6 (135 aa).

Belongs to the eukaryotic ribosomal protein eS6 family.

This is Small ribosomal subunit protein eS6 from Methanococcoides burtonii (strain DSM 6242 / NBRC 107633 / OCM 468 / ACE-M).